The primary structure comprises 145 residues: Arginine repressor (145 aa).

This sequence belongs to the ArgR family.

It localises to the cytoplasm. The protein operates within amino-acid biosynthesis; L-arginine biosynthesis [regulation]. Regulates arginine biosynthesis genes. In Streptococcus pyogenes serotype M6 (strain ATCC BAA-946 / MGAS10394), this protein is Arginine repressor.